The chain runs to 164 residues: MSLVLSRMLLDRFFPGAGGVVAGEARPPMDWRETPVAHVFEMDLPGLAKDQVAVEVVDGHILRVRAGGEHEDANNAAKAGKASGEEEEENDGVRWHCRERAAGRRRAAVTQFRLPEDAAADEASARMADGVLTVTVPKRKGKKRHAGNGKAAGDDKPVCCRFWP.

The sHSP domain occupies Val-20 to Asp-154. Residues Gly-68 to Val-93 are disordered.

It belongs to the small heat shock protein (HSP20) family. As to quaternary structure, may form oligomeric structures.

It is found in the cytoplasm. In Oryza sativa subsp. japonica (Rice), this protein is 17.8 kDa heat shock protein (HSP17.8).